We begin with the raw amino-acid sequence, 337 residues long: Nucleoid-associated protein HSM_0096 (337 aa).

Belongs to the YejK family.

It is found in the cytoplasm. It localises to the nucleoid. This chain is Nucleoid-associated protein HSM_0096, found in Histophilus somni (strain 2336) (Haemophilus somnus).